We begin with the raw amino-acid sequence, 356 residues long: Torsin-like protein (356 aa).

A signal peptide spans methionine 1–threonine 18. Glycine 110–asparagine 117 contributes to the ATP binding site. Residues asparagine 125 and asparagine 250 are each glycosylated (N-linked (GlcNAc...) asparagine).

It belongs to the ClpA/ClpB family. Torsin subfamily.

The protein localises to the endoplasmic reticulum lumen. May serve as a molecular chaperone assisting in the proper folding of secreted and/or membrane proteins. The protein is Torsin-like protein (ooc-5) of Caenorhabditis elegans.